The chain runs to 906 residues: Formin-like protein 18 (906 aa).

The first 25 residues, Met1–Gly25, serve as a signal peptide directing secretion. Residues Met120–Phe140 traverse the membrane as a helical segment. 2 disordered regions span residues Ala267 to Pro416 and Asn854 to Asp906. Positions Ala274–Pro292 are enriched in pro residues. A compositionally biased stretch (basic residues) spans Ser293–Pro303. Pro residues-rich tracts occupy residues Ala320 to Ser339, Gly348 to Gly375, and Gly383 to Lys402. 2 stretches are compositionally biased toward low complexity: residues Lys403–Pro416 and Asn854–Phe877. In terms of domain architecture, FH2 spans Ala411–Ala866. Positions Arg878 to Ala889 are enriched in basic and acidic residues. Over residues Ser897–Asp906 the composition is skewed to low complexity.

The protein belongs to the formin-like family. Class-I subfamily.

It is found in the membrane. This is Formin-like protein 18 (FH18) from Oryza sativa subsp. japonica (Rice).